We begin with the raw amino-acid sequence, 299 residues long: MTFKSGFVAILGRPNVGKSTFLNHVMGQXIAIMXDKAXTTRNKIMGIYTTDKEQIVFIDTPGIHKPKTALGDFMVESAYSTLREVDTVLFMVPADEARGKGDDMIIERLKAAKVPVILVVNKIDKVHPDQLLSQIDDFRNQMDFKEIVPISALQGNNVSRLVDILSENLDEGFQYFPSDQITDHPERFLVSEMVREKVLHLTREEIPHSVAVVVDSMKRDEETDKVHIRATIMVERDSQKGIIIGKGGAMLKKIGSMARRDIELMLGDKVFLETWVKVKKNWRDKKLDLADFGYNEREY.

Residues 4–171 form the Era-type G domain; that stretch reads KSGFVAILGR…VDILSENLDE (168 aa). Residues 12-19 are G1; it reads GRPNVGKS. GTP is bound at residue 12 to 19; the sequence is GRPNVGKS. The G2 stretch occupies residues 38–42; it reads XTTRN. The tract at residues 59–62 is G3; the sequence is DTPG. Residues 59-63 and 121-124 contribute to the GTP site; these read DTPGI and NKID. The segment at 121 to 124 is G4; sequence NKID. Residues 150–152 are G5; that stretch reads ISA. Residues 202–280 form the KH type-2 domain; it reads TREEIPHSVA…FLETWVKVKK (79 aa).

This sequence belongs to the TRAFAC class TrmE-Era-EngA-EngB-Septin-like GTPase superfamily. Era GTPase family. As to quaternary structure, monomer.

It is found in the cytoplasm. Its subcellular location is the cell membrane. An essential GTPase that binds both GDP and GTP, with rapid nucleotide exchange. Plays a role in 16S rRNA processing and 30S ribosomal subunit biogenesis and possibly also in cell cycle regulation and energy metabolism. This chain is GTPase Era, found in Streptococcus pneumoniae serotype 19F (strain G54).